Here is a 265-residue protein sequence, read N- to C-terminus: Glutamate racemase (265 aa).

Residues 12–13 and 44–45 contribute to the substrate site; these read DS and YG. The active-site Proton donor/acceptor is cysteine 75. Position 76–77 (76–77) interacts with substrate; that stretch reads NT. The active-site Proton donor/acceptor is the cysteine 186. Position 187-188 (187-188) interacts with substrate; sequence TH.

It belongs to the aspartate/glutamate racemases family.

The catalysed reaction is L-glutamate = D-glutamate. It participates in cell wall biogenesis; peptidoglycan biosynthesis. Its function is as follows. Provides the (R)-glutamate required for cell wall biosynthesis. The sequence is that of Glutamate racemase from Pseudomonas aeruginosa (strain UCBPP-PA14).